Consider the following 293-residue polypeptide: ATP synthase gamma chain (293 aa).

It belongs to the ATPase gamma chain family. F-type ATPases have 2 components, CF(1) - the catalytic core - and CF(0) - the membrane proton channel. CF(1) has five subunits: alpha(3), beta(3), gamma(1), delta(1), epsilon(1). CF(0) has three main subunits: a, b and c.

The protein resides in the cell inner membrane. Its function is as follows. Produces ATP from ADP in the presence of a proton gradient across the membrane. The gamma chain is believed to be important in regulating ATPase activity and the flow of protons through the CF(0) complex. The sequence is that of ATP synthase gamma chain from Beijerinckia indica subsp. indica (strain ATCC 9039 / DSM 1715 / NCIMB 8712).